A 225-amino-acid polypeptide reads, in one-letter code: Ribosomal RNA small subunit methyltransferase G (225 aa).

Residues Gly-69, 119 to 120 (AE), and Arg-136 each bind S-adenosyl-L-methionine.

This sequence belongs to the methyltransferase superfamily. RNA methyltransferase RsmG family.

It localises to the cytoplasm. In terms of biological role, specifically methylates the N7 position of a guanine in 16S rRNA. The chain is Ribosomal RNA small subunit methyltransferase G from Pseudothermotoga lettingae (strain ATCC BAA-301 / DSM 14385 / NBRC 107922 / TMO) (Thermotoga lettingae).